The following is a 531-amino-acid chain: MSSALDDRAVAAPPNPPADHHTRGARFLLLLAVFLCAACGLVYELALTALGSYLIGNSVLQTSVVISVMVFAMGVGSLAAKPLRHRPVVAFAVVEGVLALVGGLSVLMLYAAFAWLQLYMPAMIVVSLVVGLLIGAEIPLLMTLLQRIRTQEASSAVADMFAVDYIGALVGGLCFPLFLLPTFGQLKGALVVGVVNAVAGVIVVVFIFRRQTGRLVKAGLLAGVALVLAALGTTYVLADDLEVTARQHMYADPIIHSETTQYQDIVVTRSTAFTGEPDVRLFLNGDLQFSSVDEYRYHESLVHPALSGPHSNVLIMGGGDGLALREVLRHEGVRHVTLVELDPAMTRLARTFEPLRKLNQGSLDDPRAKVVNADAFTWLREARQQYDAVIIDFPDPDSASLAKLYSVEFYDLLRRVLAPDGQVMVQSGSPFFAPKTYWSIAKTIETAGYATTEFQIDVPSFGNWGFVLARPGTEAPPLRLARDTPKLRYLDAAVLKAATVFPVDRRRTDVRPSTLMDPAVLEYVQDEWRDY.

7 helical membrane-spanning segments follow: residues 27–47, 59–79, 96–116, 122–142, 160–180, 188–208, and 218–238; these read FLLLLAVFLCAACGLVYELAL, VLQTSVVISVMVFAMGVGSLA, GVLALVGGLSVLMLYAAFAWL, AMIVVSLVVGLLIGAEIPLLM, MFAVDYIGALVGGLCFPLFLL, GALVVGVVNAVAGVIVVVFIF, and AGLLAGVALVLAALGTTYVLA. A spermidine synthase region spans residues 205-476; sequence VFIFRRQTGR…VLARPGTEAP (272 aa). The PABS domain occupies 233–471; that stretch reads TTYVLADDLE…GNWGFVLARP (239 aa). Residue glutamine 263 participates in S-methyl-5'-thioadenosine binding. Positions 298 and 320 each coordinate spermidine. S-methyl-5'-thioadenosine is bound by residues glutamate 340 and 374–375; that span reads DA. Aspartate 392 acts as the Proton acceptor in catalysis.

Belongs to the spermidine/spermine synthase family. As to quaternary structure, homodimer or homotetramer.

It localises to the cell membrane. It catalyses the reaction S-adenosyl 3-(methylsulfanyl)propylamine + putrescine = S-methyl-5'-thioadenosine + spermidine + H(+). The protein operates within amine and polyamine biosynthesis; spermidine biosynthesis; spermidine from putrescine: step 1/1. Catalyzes the irreversible transfer of a propylamine group from the amino donor S-adenosylmethioninamine (decarboxy-AdoMet) to putrescine (1,4-diaminobutane) to yield spermidine. The sequence is that of Polyamine aminopropyltransferase 1 from Streptomyces coelicolor (strain ATCC BAA-471 / A3(2) / M145).